The primary structure comprises 58 residues: MAVPKKRTSKSKKNMRKANWKNQAKLAAKKALSLGKSVETQRSHSFVHPRYEEEEEED.

Positions 1-19 are enriched in basic residues; sequence MAVPKKRTSKSKKNMRKAN. The segment at 1–58 is disordered; it reads MAVPKKRTSKSKKNMRKANWKNQAKLAAKKALSLGKSVETQRSHSFVHPRYEEEEEED. A compositionally biased stretch (low complexity) spans 20 to 32; it reads WKNQAKLAAKKAL.

The protein belongs to the bacterial ribosomal protein bL32 family.

The sequence is that of Large ribosomal subunit protein bL32 from Trichodesmium erythraeum (strain IMS101).